The following is a 903-amino-acid chain: DNA gyrase subunit A (903 aa).

In terms of domain architecture, Topo IIA-type catalytic spans 36 to 499 (LPDARDGFKP…AIDDSDDEDL (464 aa)). The active-site O-(5'-phospho-DNA)-tyrosine intermediate is the Tyr124. Positions 526–532 (QNRGGKG) match the GyrA-box motif. A compositionally biased stretch (basic and acidic residues) spans 881–895 (VDDDSVVKDDAEKQE). The tract at residues 881–903 (VDDDSVVKDDAEKQEIGPTETEE) is disordered.

The protein belongs to the type II topoisomerase GyrA/ParC subunit family. Heterotetramer, composed of two GyrA and two GyrB chains. In the heterotetramer, GyrA contains the active site tyrosine that forms a transient covalent intermediate with DNA, while GyrB binds cofactors and catalyzes ATP hydrolysis.

The protein localises to the cytoplasm. It carries out the reaction ATP-dependent breakage, passage and rejoining of double-stranded DNA.. In terms of biological role, a type II topoisomerase that negatively supercoils closed circular double-stranded (ds) DNA in an ATP-dependent manner to modulate DNA topology and maintain chromosomes in an underwound state. Negative supercoiling favors strand separation, and DNA replication, transcription, recombination and repair, all of which involve strand separation. Also able to catalyze the interconversion of other topological isomers of dsDNA rings, including catenanes and knotted rings. Type II topoisomerases break and join 2 DNA strands simultaneously in an ATP-dependent manner. The protein is DNA gyrase subunit A of Fibrobacter succinogenes (strain ATCC 19169 / S85).